Here is a 610-residue protein sequence, read N- to C-terminus: Glutamine--fructose-6-phosphate aminotransferase [isomerizing] (610 aa).

Cysteine 2 acts as the Nucleophile; for GATase activity in catalysis. In terms of domain architecture, Glutamine amidotransferase type-2 spans 2–218 (CGIVGAVAQR…EGDVAEITRR (217 aa)). 2 SIS domains span residues 286–426 (AADI…EQGR) and 459–600 (LATD…VDQP). Catalysis depends on lysine 605, which acts as the For Fru-6P isomerization activity.

In terms of assembly, homodimer.

Its subcellular location is the cytoplasm. The catalysed reaction is D-fructose 6-phosphate + L-glutamine = D-glucosamine 6-phosphate + L-glutamate. Catalyzes the first step in hexosamine metabolism, converting fructose-6P into glucosamine-6P using glutamine as a nitrogen source. The sequence is that of Glutamine--fructose-6-phosphate aminotransferase [isomerizing] from Vibrio parahaemolyticus serotype O3:K6 (strain RIMD 2210633).